The following is a 283-amino-acid chain: RNase adapter protein RapZ (283 aa).

ATP is bound at residue 8–15 (GRSGSGKS). 56 to 59 (DVRN) provides a ligand contact to GTP. Residues 266-283 (RSRGKNVQSRHRTLEKRK) are RNA-binding.

The protein belongs to the RapZ-like family. RapZ subfamily. In terms of assembly, homotrimer.

Its function is as follows. Modulates the synthesis of GlmS, by affecting the processing and stability of the regulatory small RNA GlmZ. When glucosamine-6-phosphate (GlcN6P) concentrations are high in the cell, RapZ binds GlmZ and targets it to cleavage by RNase E. Consequently, GlmZ is inactivated and unable to activate GlmS synthesis. Under low GlcN6P concentrations, RapZ is sequestered and inactivated by an other regulatory small RNA, GlmY, preventing GlmZ degradation and leading to synthesis of GlmS. The protein is RNase adapter protein RapZ of Photorhabdus laumondii subsp. laumondii (strain DSM 15139 / CIP 105565 / TT01) (Photorhabdus luminescens subsp. laumondii).